Here is an 86-residue protein sequence, read N- to C-terminus: Small ribosomal subunit protein uS15 (86 aa).

The tract at residues 1-22 is disordered; the sequence is MSIDTQKVIEDNKRSSADTGSP. A compositionally biased stretch (basic and acidic residues) spans 7-16; sequence KVIEDNKRSS.

The protein belongs to the universal ribosomal protein uS15 family. In terms of assembly, part of the 30S ribosomal subunit. Forms a bridge to the 50S subunit in the 70S ribosome, contacting the 23S rRNA.

In terms of biological role, one of the primary rRNA binding proteins, it binds directly to 16S rRNA where it helps nucleate assembly of the platform of the 30S subunit by binding and bridging several RNA helices of the 16S rRNA. Functionally, forms an intersubunit bridge (bridge B4) with the 23S rRNA of the 50S subunit in the ribosome. This chain is Small ribosomal subunit protein uS15, found in Stenotrophomonas maltophilia (strain R551-3).